The sequence spans 227 residues: Eukaryotic translation initiation factor NCBP (227 aa).

The segment covering 1–22 has biased composition (basic and acidic residues); that stretch reads MEPAAEKREAEQEELQQQHDEP. The segment at 1 to 43 is disordered; it reads MEPAAEKREAEQEELQQQHDEPAVPSADDDEAEAEENERRNRE. Residues 27-36 show a composition bias toward acidic residues; that stretch reads ADDDEAEAEE.

It belongs to the eukaryotic initiation factor 4E family. In terms of assembly, EIF4F is a multi-subunit complex, the composition of which varies with external and internal environmental conditions. It is composed of at least EIF4A, EIF4E and EIF4G. EIF4E is also known to interact with other partners. In higher plants two isoforms of EIF4F have been identified, named isoform EIF4F and isoform EIF(iso)4F. Isoform EIF4F has subunits p220 and p26, whereas isoform EIF(iso)4F has subunits p82 and p28.

In terms of biological role, recognizes and binds the 7-methylguanosine-containing mRNA cap during an early step in the initiation of protein synthesis and facilitates ribosome binding by inducing the unwinding of the mRNAs secondary structures. In Oryza sativa subsp. japonica (Rice), this protein is Eukaryotic translation initiation factor NCBP (NCBP).